We begin with the raw amino-acid sequence, 185 residues long: Large ribosomal subunit protein bL17 (185 aa).

It belongs to the bacterial ribosomal protein bL17 family. Part of the 50S ribosomal subunit. Contacts protein L32.

This chain is Large ribosomal subunit protein bL17, found in Rhodococcus erythropolis (strain PR4 / NBRC 100887).